We begin with the raw amino-acid sequence, 555 residues long: Inositol 1,4,5-trisphosphate receptor-interacting protein-like 1 (555 aa).

A signal peptide spans 1–24 (MNVDAEASMAVISLLFLAVMYVVH). Topologically, residues 25–103 (HPLMVSDRMD…WPFQADGQEG (79 aa)) are extracellular. Residues 38–74 (LARSRQLEKRMSEEMRLLEMEFEERKRAAEQRQKAEN) are a coiled coil. The helical transmembrane segment at 104–124 (PLGWMLGNLWNTGLFCLFLVF) threads the bilayer. The Cytoplasmic portion of the chain corresponds to 125 to 555 (ELLRQNMQHE…LPHAPLAAAP (431 aa)).

It belongs to the ITPRIP family. In terms of tissue distribution, expressed in testis and tumoral cells.

It is found in the cell membrane. In terms of biological role, functions as a ligand of CD3E, inhibiting TCR-CD3 complex signaling to regulate T cell activation. Induces stable CD3E-NCK1 binding, thereby preventing the CD3E-ZAP70 interaction and subsequently inhibiting the activation of the downstream ERK-NFkB signaling cascade and calcium influx. In Homo sapiens (Human), this protein is Inositol 1,4,5-trisphosphate receptor-interacting protein-like 1.